A 291-amino-acid chain; its full sequence is 4-hydroxy-tetrahydrodipicolinate synthase (291 aa).

Thr44 serves as a coordination point for pyruvate. Tyr132 functions as the Proton donor/acceptor in the catalytic mechanism. The Schiff-base intermediate with substrate role is filled by Lys160. Ile202 is a pyruvate binding site.

This sequence belongs to the DapA family. Homotetramer; dimer of dimers.

It is found in the cytoplasm. The catalysed reaction is L-aspartate 4-semialdehyde + pyruvate = (2S,4S)-4-hydroxy-2,3,4,5-tetrahydrodipicolinate + H2O + H(+). It participates in amino-acid biosynthesis; L-lysine biosynthesis via DAP pathway; (S)-tetrahydrodipicolinate from L-aspartate: step 3/4. Its function is as follows. Catalyzes the condensation of (S)-aspartate-beta-semialdehyde [(S)-ASA] and pyruvate to 4-hydroxy-tetrahydrodipicolinate (HTPA). In Roseobacter denitrificans (strain ATCC 33942 / OCh 114) (Erythrobacter sp. (strain OCh 114)), this protein is 4-hydroxy-tetrahydrodipicolinate synthase.